Reading from the N-terminus, the 31-residue chain is Cytochrome b6-f complex subunit 6 (31 aa).

Residues 4 to 26 form a helical membrane-spanning segment; sequence ITSYFGFLLAASTITPALFIGLS.

Belongs to the PetL family. In terms of assembly, the 4 large subunits of the cytochrome b6-f complex are cytochrome b6, subunit IV (17 kDa polypeptide, PetD), cytochrome f and the Rieske protein, while the 4 small subunits are PetG, PetL, PetM and PetN. The complex functions as a dimer.

It localises to the plastid. The protein localises to the chloroplast thylakoid membrane. Functionally, component of the cytochrome b6-f complex, which mediates electron transfer between photosystem II (PSII) and photosystem I (PSI), cyclic electron flow around PSI, and state transitions. PetL is important for photoautotrophic growth as well as for electron transfer efficiency and stability of the cytochrome b6-f complex. This chain is Cytochrome b6-f complex subunit 6, found in Buxus microphylla (Littleleaf boxwood).